Consider the following 240-residue polypeptide: tRNA pseudouridine synthase A (240 aa).

Residue D52 is the Nucleophile of the active site. Residue Y110 coordinates substrate.

The protein belongs to the tRNA pseudouridine synthase TruA family. Homodimer.

It carries out the reaction uridine(38/39/40) in tRNA = pseudouridine(38/39/40) in tRNA. Functionally, formation of pseudouridine at positions 38, 39 and 40 in the anticodon stem and loop of transfer RNAs. The polypeptide is tRNA pseudouridine synthase A (Solibacter usitatus (strain Ellin6076)).